Reading from the N-terminus, the 397-residue chain is Elongation factor Tu (397 aa).

In terms of domain architecture, tr-type G spans Lys-10 to Glu-206. The segment at Gly-19–Thr-26 is G1. GTP is bound at residue Gly-19–Thr-26. Thr-26 is a Mg(2+) binding site. The tract at residues Gly-60 to Asn-64 is G2. The G3 stretch occupies residues Asp-81–Gly-84. GTP is bound by residues Asp-81–His-85 and Asn-136–Asp-139. Residues Asn-136–Asp-139 form a G4 region. Residues Ser-174–Leu-176 are G5.

The protein belongs to the TRAFAC class translation factor GTPase superfamily. Classic translation factor GTPase family. EF-Tu/EF-1A subfamily. As to quaternary structure, monomer.

It is found in the cytoplasm. It catalyses the reaction GTP + H2O = GDP + phosphate + H(+). Functionally, GTP hydrolase that promotes the GTP-dependent binding of aminoacyl-tRNA to the A-site of ribosomes during protein biosynthesis. The chain is Elongation factor Tu from Clostridium beijerinckii (strain ATCC 51743 / NCIMB 8052) (Clostridium acetobutylicum).